The following is a 136-amino-acid chain: NADPH-dependent 7-cyano-7-deazaguanine reductase (136 aa).

The active-site Thioimide intermediate is Cys50. The active-site Proton donor is the Asp57. Substrate-binding positions include 72–74 and 91–92; these read YEL and HE.

It belongs to the GTP cyclohydrolase I family. QueF type 1 subfamily.

It is found in the cytoplasm. The enzyme catalyses 7-aminomethyl-7-carbaguanine + 2 NADP(+) = 7-cyano-7-deazaguanine + 2 NADPH + 3 H(+). It participates in tRNA modification; tRNA-queuosine biosynthesis. Its function is as follows. Catalyzes the NADPH-dependent reduction of 7-cyano-7-deazaguanine (preQ0) to 7-aminomethyl-7-deazaguanine (preQ1). This is NADPH-dependent 7-cyano-7-deazaguanine reductase from Prochlorococcus marinus (strain AS9601).